A 799-amino-acid polypeptide reads, in one-letter code: Ribosome-releasing factor 2, mitochondrial (799 aa).

A tr-type G domain is found at 19–306 (SKIRNIGIIA…AVVNYLPSPL (288 aa)). GTP-binding positions include 28 to 35 (AHIDAGKT), 93 to 97 (DTPGH), and 145 to 148 (NKMD).

Belongs to the TRAFAC class translation factor GTPase superfamily. Classic translation factor GTPase family. EF-G/EF-2 subfamily.

Its subcellular location is the mitochondrion. Its function is as follows. Mitochondrial GTPase that mediates the disassembly of ribosomes from messenger RNA at the termination of mitochondrial protein biosynthesis. Not involved in the GTP-dependent ribosomal translocation step during translation elongation. In Vanderwaltozyma polyspora (strain ATCC 22028 / DSM 70294 / BCRC 21397 / CBS 2163 / NBRC 10782 / NRRL Y-8283 / UCD 57-17) (Kluyveromyces polysporus), this protein is Ribosome-releasing factor 2, mitochondrial.